Here is a 207-residue protein sequence, read N- to C-terminus: Large ribosomal subunit protein bL25 (207 aa).

The protein belongs to the bacterial ribosomal protein bL25 family. CTC subfamily. As to quaternary structure, part of the 50S ribosomal subunit; part of the 5S rRNA/L5/L18/L25 subcomplex. Contacts the 5S rRNA. Binds to the 5S rRNA independently of L5 and L18.

Its function is as follows. This is one of the proteins that binds to the 5S RNA in the ribosome where it forms part of the central protuberance. The sequence is that of Large ribosomal subunit protein bL25 from Bordetella petrii (strain ATCC BAA-461 / DSM 12804 / CCUG 43448).